Consider the following 610-residue polypeptide: Oxidoreductase ptaE (610 aa).

Positions 1-20 (MFQSILFLAFYGRPVFGSAA) are cleaved as a signal peptide. 2 Plastocyanin-like domains span residues 67 to 181 (QIIS…HGPS) and 191 to 344 (PWLL…IVRY). N-linked (GlcNAc...) asparagine glycosylation is found at Asn105, Asn111, Asn262, Asn277, Asn330, Asn356, Asn401, Asn409, Asn427, and Asn602. The Plastocyanin-like 3 domain maps to 425 to 568 (YVNWSEPSVK…IAIQFLEQPS (144 aa)).

This sequence belongs to the multicopper oxidase family.

The protein operates within secondary metabolite biosynthesis. Oxidoreductase; part of the gene cluster that mediates the biosynthesis of pestheic acid, a diphenyl ether which is a biosynthetic precursor of the unique chloropupukeananes. The biosynthesis initiates from condensation of acetate and malonate units catalyzed by the non-reducing PKS ptaA. As the ptaA protein is TE/CLC domain-deficient, hydrolysis and Claisen cyclization of the polyketide could be catalyzed by ptaB containing a beta-lactamase domain. The ptaB protein might hydrolyze the thioester bond between the ACP of ptaA and the intermediate to release atrochrysone carboxylic acid, which is spontaneously dehydrated to form endocrocin anthrone. Endocrocin anthrone is then converted to endocrocin, catalyzed by the anthrone oxygenase ptaC. Spontaneous decarboxylation of endocrocin occurs to generate emodin. An O-methyltransferase (ptaH or ptaI) could methylate emodin to form physcion. PtaJ could then catalyze the oxidative cleavage of physcion, and rotation of the intermediate could then afford desmethylisosulochrin. PtaF, a putative NADH-dependent oxidoreductase, might also participate in the oxidative cleavage step. Desmethylisosulochrin is then transformed by another O-methyltransferase (ptaH or ptaI) to form isosulochrin. Chlorination of isosulochrin by ptaM in the cyclohexadienone B ring then produces chloroisosulochrin. PtaE is responsible for the oxidative coupling reactions of both benzophenones isosulouchrin and chloroisosulochrin to RES-1214-1 and pestheic acid respectively, regardless of chlorination. The chain is Oxidoreductase ptaE from Pestalotiopsis fici (strain W106-1 / CGMCC3.15140).